A 316-amino-acid polypeptide reads, in one-letter code: Ornithine carbamoyltransferase (316 aa).

Carbamoyl phosphate contacts are provided by residues serine 57–threonine 60, glutamine 84, arginine 108, and histidine 135–glutamine 138. L-ornithine is bound by residues asparagine 166, aspartate 230, and serine 234–methionine 235. Carbamoyl phosphate-binding positions include cysteine 269–leucine 270 and arginine 297.

This sequence belongs to the aspartate/ornithine carbamoyltransferase superfamily. OTCase family.

The protein resides in the cytoplasm. It catalyses the reaction carbamoyl phosphate + L-ornithine = L-citrulline + phosphate + H(+). The protein operates within amino-acid biosynthesis; L-arginine biosynthesis; L-arginine from L-ornithine and carbamoyl phosphate: step 1/3. Its function is as follows. Reversibly catalyzes the transfer of the carbamoyl group from carbamoyl phosphate (CP) to the N(epsilon) atom of ornithine (ORN) to produce L-citrulline. This Bacillus cereus (strain ZK / E33L) protein is Ornithine carbamoyltransferase.